The chain runs to 348 residues: Putative 4-hydroxythreonine-4-phosphate dehydrogenase 2 (348 aa).

Residues His180, His224, and His279 each coordinate a divalent metal cation.

It belongs to the PdxA family. In terms of assembly, homodimer. It depends on Zn(2+) as a cofactor. Requires Mg(2+) as cofactor. The cofactor is Co(2+).

The protein resides in the cytoplasm. The catalysed reaction is 4-(phosphooxy)-L-threonine + NAD(+) = 3-amino-2-oxopropyl phosphate + CO2 + NADH. It participates in cofactor biosynthesis; pyridoxine 5'-phosphate biosynthesis; pyridoxine 5'-phosphate from D-erythrose 4-phosphate: step 4/5. Its function is as follows. Catalyzes the NAD(P)-dependent oxidation of 4-(phosphooxy)-L-threonine (HTP) into 2-amino-3-oxo-4-(phosphooxy)butyric acid which spontaneously decarboxylates to form 3-amino-2-oxopropyl phosphate (AHAP). The sequence is that of Putative 4-hydroxythreonine-4-phosphate dehydrogenase 2 from Rhizobium meliloti (strain 1021) (Ensifer meliloti).